Reading from the N-terminus, the 334-residue chain is Mitochondrial glycine transporter (334 aa).

Solcar repeat units lie at residues 10–94 (SKSS…IRQA), 127–211 (LSNT…FKRR), and 234–318 (RAAA…LIMR). 6 consecutive transmembrane segments (helical) span residues 16–41 (FVAG…TRVQ), 69–95 (GTVP…RQAA), 133–158 (LLAG…VRYE), 186–209 (GFGA…EQFK), 238–264 (VNFS…KTRI), and 293–311 (GLGL…AWTL).

It belongs to the mitochondrial carrier (TC 2.A.29) family. SLC25A38 subfamily.

Its subcellular location is the mitochondrion inner membrane. It carries out the reaction glycine(in) = glycine(out). In terms of biological role, mitochondrial glycine transporter that imports glycine into the mitochondrial matrix. Plays an important role in providing glycine for the first enzymatic step in heme biosynthesis, the condensation of glycine with succinyl-CoA to produce 5-aminolevulinate (ALA) in the mitochondrial matrix. The protein is Mitochondrial glycine transporter of Pyricularia oryzae (strain 70-15 / ATCC MYA-4617 / FGSC 8958) (Rice blast fungus).